Consider the following 388-residue polypeptide: Deoxyuridine 5'-triphosphate nucleotidohydrolase (388 aa).

Residues 77-88 are compositionally biased toward basic and acidic residues; it reads EEKYDKEQHPGE. Disordered regions lie at residues 77–96 and 336–388; these read EEKYDKEQHPGEDEASSPLP and THTP…PRHP. A compositionally biased stretch (acidic residues) spans 351–363; sequence VDDDVDETEEDEK.

Belongs to the dUTPase family. Mg(2+) is required as a cofactor.

It catalyses the reaction dUTP + H2O = dUMP + diphosphate + H(+). Its pathway is pyrimidine metabolism; dUMP biosynthesis; dUMP from dCTP (dUTP route): step 2/2. Its function is as follows. Involved in nucleotide metabolism: produces dUMP, the immediate precursor of thymidine nucleotides and decreases the intracellular concentration of dUTP to avoid uracil incorporation into viral DNA. The chain is Deoxyuridine 5'-triphosphate nucleotidohydrolase from Homo sapiens (Human).